A 702-amino-acid chain; its full sequence is p-hydroxybenzoic acid--AMP ligase FadD22 (702 aa).

In terms of domain architecture, Carrier spans 538-616 (ERHRLVLDAV…GLAQYLEAEL (79 aa)). An O-(pantetheine 4'-phosphoryl)serine modification is found at Ser576.

This sequence belongs to the ATP-dependent AMP-binding enzyme family.

The catalysed reaction is holo-[4-hydroxyphenylalkanoate synthase] + 4-hydroxybenzoate + ATP = 4-hydroxyphenyl-[4-hydroxyphenylalkanoate synthase] + AMP + diphosphate. It functions in the pathway lipid metabolism; fatty acid biosynthesis. In terms of biological role, catalyzes the adenylation of p-hydroxybenzoic acid (pHBA) to form p-hydroxybenzoic acid-AMP (pHBA-AMP), which is converted directly to p-hydroxybenzoyl-S-FadD22 (pHBA-S-FAdD22) thioester intermediate in a CoA-independent manner by attack of the phosphopantetheine thiol of FadD22. This intermediate primes the biosynthesis of the phenolphthiocerol (PPOL) by presenting the pHBA starter unit for elongation by Pks15/1. PPOL is an important intermediate in the biosynthesis of phenolic glycolipid (mycosid B). The protein is p-hydroxybenzoic acid--AMP ligase FadD22 (fadD22) of Mycobacterium marinum (strain ATCC BAA-535 / M).